Reading from the N-terminus, the 353-residue chain is Photosystem II protein D1 (353 aa).

T2 carries the post-translational modification N-acetylthreonine. T2 is subject to Phosphothreonine. The next 3 membrane-spanning stretches (helical) occupy residues 29 to 46 (YIGW…TATS), 118 to 133 (HFLL…EWEL), and 142 to 156 (WIAV…AATA). H118 contributes to the chlorophyll a binding site. A pheophytin a-binding site is contributed by Y126. Residues D170 and E189 each coordinate [CaMn4O5] cluster. Residues 197 to 218 (FHMLGVAGVFGGSLFSAMHGSL) traverse the membrane as a helical segment. H198 contributes to the chlorophyll a binding site. A quinone is bound by residues H215 and 264 to 265 (SF). A Fe cation-binding site is contributed by H215. H272 contacts Fe cation. Residues 274–288 (FLAAWPVVCIWFTAL) traverse the membrane as a helical segment. 4 residues coordinate [CaMn4O5] cluster: H332, E333, D342, and A344. The propeptide occupies 345-353 (SVDAPAVQG).

It belongs to the reaction center PufL/M/PsbA/D family. As to quaternary structure, PSII is composed of 1 copy each of membrane proteins PsbA, PsbB, PsbC, PsbD, PsbE, PsbF, PsbH, PsbI, PsbJ, PsbK, PsbL, PsbM, PsbT, PsbX, PsbY, PsbZ, Psb30/Ycf12, at least 3 peripheral proteins of the oxygen-evolving complex and a large number of cofactors. It forms dimeric complexes. It depends on The D1/D2 heterodimer binds P680, chlorophylls that are the primary electron donor of PSII, and subsequent electron acceptors. It shares a non-heme iron and each subunit binds pheophytin, quinone, additional chlorophylls, carotenoids and lipids. D1 provides most of the ligands for the Mn4-Ca-O5 cluster of the oxygen-evolving complex (OEC). There is also a Cl(-1) ion associated with D1 and D2, which is required for oxygen evolution. The PSII complex binds additional chlorophylls, carotenoids and specific lipids. as a cofactor. Tyr-161 forms a radical intermediate that is referred to as redox-active TyrZ, YZ or Y-Z. Post-translationally, C-terminally processed by CTPA; processing is essential to allow assembly of the oxygen-evolving complex and thus photosynthetic growth.

Its subcellular location is the plastid. It is found in the chloroplast thylakoid membrane. It carries out the reaction 2 a plastoquinone + 4 hnu + 2 H2O = 2 a plastoquinol + O2. Photosystem II (PSII) is a light-driven water:plastoquinone oxidoreductase that uses light energy to abstract electrons from H(2)O, generating O(2) and a proton gradient subsequently used for ATP formation. It consists of a core antenna complex that captures photons, and an electron transfer chain that converts photonic excitation into a charge separation. The D1/D2 (PsbA/PsbD) reaction center heterodimer binds P680, the primary electron donor of PSII as well as several subsequent electron acceptors. The polypeptide is Photosystem II protein D1 (Nephroselmis olivacea (Green alga)).